Reading from the N-terminus, the 64-residue chain is Large ribosomal subunit protein uL30 (64 aa).

The disordered stretch occupies residues 1-22; the sequence is MSEQVKRVRVTQVGSPIGRKPG.

Belongs to the universal ribosomal protein uL30 family. Part of the 50S ribosomal subunit.

In Acidiphilium cryptum (strain JF-5), this protein is Large ribosomal subunit protein uL30.